Reading from the N-terminus, the 78-residue chain is Acyl carrier protein (78 aa).

Residues 1 to 76 (MSLEERVKEI…DVINYLKEKV (76 aa)) enclose the Carrier domain. An O-(pantetheine 4'-phosphoryl)serine modification is found at S36.

This sequence belongs to the acyl carrier protein (ACP) family. 4'-phosphopantetheine is transferred from CoA to a specific serine of apo-ACP by AcpS. This modification is essential for activity because fatty acids are bound in thioester linkage to the sulfhydryl of the prosthetic group.

The protein resides in the cytoplasm. The protein operates within lipid metabolism; fatty acid biosynthesis. Carrier of the growing fatty acid chain in fatty acid biosynthesis. This chain is Acyl carrier protein, found in Aquifex aeolicus (strain VF5).